A 1238-amino-acid chain; its full sequence is Anion exchange protein 2 (1238 aa).

The segment at methionine 1–glycine 238 is disordered. Over methionine 1–glutamine 704 the chain is Cytoplasmic. Composition is skewed to basic and acidic residues over residues aspartate 37–glutamate 49 and glycine 58–arginine 75. Composition is skewed to basic residues over residues glutamine 76 to leucine 85 and arginine 94 to proline 110. Residues threonine 120–glutamate 133 are compositionally biased toward acidic residues. Phosphoserine occurs at positions 132, 144, 170, and 172. Over residues threonine 141–phenylalanine 154 the composition is skewed to polar residues. The span at glycine 205–serine 215 shows a compositional bias: gly residues. Phosphoserine is present on serine 239. Threonine 253 is modified (phosphothreonine). Lysine 270 bears the N6-methyllysine mark. The segment at valine 277–lysine 315 is disordered. Positions valine 280–alanine 289 are enriched in basic residues. Serine 439 is modified (phosphoserine). The segment at serine 445–isoleucine 466 is disordered. The next 4 helical transmembrane spans lie at cysteine 705–glycine 728, leucine 734–phenylalanine 771, valine 791–valine 813, and isoleucine 823–phenylalanine 844. The membrane (anion exchange) stretch occupies residues cysteine 705 to valine 1238. Topologically, residues glutamine 845 to threonine 897 are extracellular. N-linked (GlcNAc...) asparagine glycans are attached at residues asparagine 856, asparagine 865, and asparagine 879. Over residues serine 858–threonine 869 the composition is skewed to polar residues. Residues serine 858–glutamine 892 form a disordered region. A helical transmembrane segment spans residues alanine 898–leucine 915. At arginine 916–arginine 930 the chain is on the cytoplasmic side. The next 5 helical transmembrane spans lie at valine 931–isoleucine 951, proline 985–methionine 1007, leucine 1033–alanine 1054, valine 1088–tyrosine 1133, and methionine 1160–leucine 1196. Residue cysteine 1170 is the site of S-palmitoyl cysteine attachment.

Belongs to the anion exchanger (TC 2.A.31) family. In terms of tissue distribution, expressed in the cochlea (at protein level).

It is found in the apical cell membrane. It localises to the basolateral cell membrane. It catalyses the reaction hydrogencarbonate(in) + chloride(out) = hydrogencarbonate(out) + chloride(in). Sodium-independent anion exchanger which mediates the electroneutral exchange of chloride for bicarbonate ions across the cell membrane. Plays an important role in osteoclast differentiation and function. Regulates bone resorption and calpain-dependent actin cytoskeleton organization in osteoclasts via anion exchange-dependent control of pH. Essential for intracellular pH regulation in CD8(+) T-cells upon CD3 stimulation, modulating CD8(+) T-cell response. The chain is Anion exchange protein 2 (SLC4A2) from Cavia porcellus (Guinea pig).